Here is a 575-residue protein sequence, read N- to C-terminus: DNA-directed RNA polymerase subunit beta' (575 aa).

Zn(2+) is bound by residues C64, C66, C85, and C88. D440, D442, and D444 together coordinate Mg(2+).

The protein belongs to the RNA polymerase beta' chain family. RpoC1 subfamily. In plastids the minimal PEP RNA polymerase catalytic core is composed of four subunits: alpha, beta, beta', and beta''. When a (nuclear-encoded) sigma factor is associated with the core the holoenzyme is formed, which can initiate transcription. It depends on Mg(2+) as a cofactor. Zn(2+) is required as a cofactor.

Its subcellular location is the plastid. It catalyses the reaction RNA(n) + a ribonucleoside 5'-triphosphate = RNA(n+1) + diphosphate. Its function is as follows. DNA-dependent RNA polymerase catalyzes the transcription of DNA into RNA using the four ribonucleoside triphosphates as substrates. The protein is DNA-directed RNA polymerase subunit beta' of Euglena longa (Euglenophycean alga).